The sequence spans 395 residues: Phosphopentomutase (395 aa).

Residues aspartate 14, aspartate 286, histidine 291, aspartate 327, histidine 328, and histidine 339 each coordinate Mn(2+).

Belongs to the phosphopentomutase family. Mn(2+) serves as cofactor.

Its subcellular location is the cytoplasm. It carries out the reaction 2-deoxy-alpha-D-ribose 1-phosphate = 2-deoxy-D-ribose 5-phosphate. It catalyses the reaction alpha-D-ribose 1-phosphate = D-ribose 5-phosphate. Its pathway is carbohydrate degradation; 2-deoxy-D-ribose 1-phosphate degradation; D-glyceraldehyde 3-phosphate and acetaldehyde from 2-deoxy-alpha-D-ribose 1-phosphate: step 1/2. In terms of biological role, isomerase that catalyzes the conversion of deoxy-ribose 1-phosphate (dRib-1-P) and ribose 1-phosphate (Rib-1-P) to deoxy-ribose 5-phosphate (dRib-5-P) and ribose 5-phosphate (Rib-5-P), respectively. The polypeptide is Phosphopentomutase (Staphylococcus saprophyticus subsp. saprophyticus (strain ATCC 15305 / DSM 20229 / NCIMB 8711 / NCTC 7292 / S-41)).